Here is a 339-residue protein sequence, read N- to C-terminus: MSKPKIGINGFGRIGRLVLRAAVEKDTVEVVAVNDPFINIDYMVYMFKYDSTHGRFKGHVSAEGGKLIVTNGKTTHQIAVHNSKDPAEIPWGVEGAEYVVESTGVFTHTEKASAHLKGGAKKVIISAPSADAPMFVMGVNNDKYDKANNHIISNASCTTNCLAPLAKVIHDKFGIIEGLMTTVHATTATQKTVDGPSGKLWRDGRGAGQNIIPASTGAAKAVGKVIPDLNGKLTGMASRVPTPDVSVVDLTCRLQKGASMDEIKAAVKEAAAGPMKGILEYTEDQVVSSDFVGDPHSSIFDALACISLNPNFVKLIAWYDNEYGYSNRVVDLISYNASK.

NAD(+)-binding positions include 13–14 (RI), aspartate 35, and lysine 84. Residues 156 to 158 (SCT), threonine 187, 216 to 217 (TG), and arginine 239 each bind D-glyceraldehyde 3-phosphate. Residue cysteine 157 is the Nucleophile of the active site. An NAD(+)-binding site is contributed by asparagine 321.

It belongs to the glyceraldehyde-3-phosphate dehydrogenase family. As to quaternary structure, homotetramer.

The protein localises to the cytoplasm. The enzyme catalyses D-glyceraldehyde 3-phosphate + phosphate + NAD(+) = (2R)-3-phospho-glyceroyl phosphate + NADH + H(+). Its pathway is carbohydrate degradation; glycolysis; pyruvate from D-glyceraldehyde 3-phosphate: step 1/5. The sequence is that of Glyceraldehyde-3-phosphate dehydrogenase from Onchocerca volvulus.